Consider the following 414-residue polypeptide: Mini-circle putative transposase for IS117 (414 aa).

In Streptomyces coelicolor (strain ATCC BAA-471 / A3(2) / M145), this protein is Mini-circle putative transposase for IS117.